Consider the following 214-residue polypeptide: Acyl-homoserine-lactone synthase (214 aa).

Belongs to the autoinducer synthase family.

It carries out the reaction a fatty acyl-[ACP] + S-adenosyl-L-methionine = an N-acyl-L-homoserine lactone + S-methyl-5'-thioadenosine + holo-[ACP] + H(+). Required for the synthesis of autoinducer molecules such as OHHL (N-(3-oxohexanoyl)-L-homoserine lactone), and HHL (N-hexanoyl-L-homoserine lactone). In Yersinia enterocolitica, this protein is Acyl-homoserine-lactone synthase (yenI).